Here is a 215-residue protein sequence, read N- to C-terminus: Large ribosomal subunit protein uL3 (215 aa).

The interval 136–155 is disordered; sequence GVSISHRSHGSTGQRQDPGK. Gln-151 bears the N5-methylglutamine mark.

The protein belongs to the universal ribosomal protein uL3 family. As to quaternary structure, part of the 50S ribosomal subunit. Forms a cluster with proteins L14 and L19. Post-translationally, methylated by PrmB.

Its function is as follows. One of the primary rRNA binding proteins, it binds directly near the 3'-end of the 23S rRNA, where it nucleates assembly of the 50S subunit. The sequence is that of Large ribosomal subunit protein uL3 from Rickettsia canadensis (strain McKiel).